Consider the following 202-residue polypeptide: ATP-dependent Clp protease proteolytic subunit (202 aa).

Serine 101 acts as the Nucleophile in catalysis. Residue histidine 126 is part of the active site.

It belongs to the peptidase S14 family. Component of the chloroplastic Clp protease core complex.

It is found in the plastid. Its subcellular location is the chloroplast stroma. It catalyses the reaction Hydrolysis of proteins to small peptides in the presence of ATP and magnesium. alpha-casein is the usual test substrate. In the absence of ATP, only oligopeptides shorter than five residues are hydrolyzed (such as succinyl-Leu-Tyr-|-NHMec, and Leu-Tyr-Leu-|-Tyr-Trp, in which cleavage of the -Tyr-|-Leu- and -Tyr-|-Trp bonds also occurs).. Functionally, cleaves peptides in various proteins in a process that requires ATP hydrolysis. Has a chymotrypsin-like activity. Plays a major role in the degradation of misfolded proteins. This Platanus occidentalis (Sycamore) protein is ATP-dependent Clp protease proteolytic subunit.